The following is a 106-amino-acid chain: Nucleoid-associated protein DIP0260 (106 aa).

It belongs to the YbaB/EbfC family. In terms of assembly, homodimer.

It localises to the cytoplasm. It is found in the nucleoid. Its function is as follows. Binds to DNA and alters its conformation. May be involved in regulation of gene expression, nucleoid organization and DNA protection. This chain is Nucleoid-associated protein DIP0260, found in Corynebacterium diphtheriae (strain ATCC 700971 / NCTC 13129 / Biotype gravis).